Reading from the N-terminus, the 290-residue chain is Nitrogenase iron protein 2 (290 aa).

10–17 (GKGGIGKS) lines the ATP pocket. Cys98 lines the [4Fe-4S] cluster pocket. ADP-ribosylarginine; by dinitrogenase reductase ADP-ribosyltransferase is present on Arg101. Cys133 provides a ligand contact to [4Fe-4S] cluster.

It belongs to the NifH/BchL/ChlL family. As to quaternary structure, homodimer. [4Fe-4S] cluster serves as cofactor. In terms of processing, the reversible ADP-ribosylation of Arg-101 inactivates the nitrogenase reductase and regulates nitrogenase activity.

The catalysed reaction is N2 + 8 reduced [2Fe-2S]-[ferredoxin] + 16 ATP + 16 H2O = H2 + 8 oxidized [2Fe-2S]-[ferredoxin] + 2 NH4(+) + 16 ADP + 16 phosphate + 6 H(+). In terms of biological role, the key enzymatic reactions in nitrogen fixation are catalyzed by the nitrogenase complex, which has 2 components: the iron protein (component 2) and a component 1 which is either a molybdenum-iron protein, a vanadium-iron, or an iron-iron protein. The polypeptide is Nitrogenase iron protein 2 (vnfH) (Azotobacter chroococcum mcd 1).